A 439-amino-acid chain; its full sequence is Agmatine coumaroyltransferase-1 (439 aa).

Active-site proton acceptor residues include histidine 152 and aspartate 385.

This sequence belongs to the plant acyltransferase family. In terms of assembly, monomer.

The enzyme catalyses 4-coumaroyl-CoA + agmatine = N-(4-guanidinobutyl)-4-hydroxycinnamamide + CoA + H(+). Inhibited by DEPC. Completely inhibited by ZnSO(4), strongly inhibited by CuSO(4), partially inhibited by MnCl(2). Unaffected by MgCl(2) or CaCl(2). Functionally, involved in the synthesis of hordatines (antifungal hydroxycinnamoylagmatine derivatives). Specific for agmatine as the acyl acceptor, inactive towards tyramine and putrescine. Has activity with the acyl donors 4-coumaroyl-CoA, cinnamoyl-CoA, caffeoyl-CoA, feruloyl-CoA, and to a lesser extent sinapoyl-CoA. This is Agmatine coumaroyltransferase-1 (ACT-1) from Hordeum vulgare (Barley).